The chain runs to 60 residues: Mastoparan-VT6 (60 aa).

Positions 1–27 (MKNTILILFTAFIALLGFFGMSAEALA) are cleaved as a signal peptide. AXPX repeat units lie at residues 27–30 (ADPK), 31–34 (ADPL), 35–38 (AGPN), and 41–44 (ADPE). Positions 28–45 (DPKADPLAGPNPDADPEA) are excised as a propeptide. The residue at position 59 (leucine 59) is a Leucine amide.

This sequence belongs to the MCD family. Mastoparan subfamily. Expressed by the venom gland.

The protein localises to the secreted. The synthetic peptide shows antimicrobial activities against Gram-negative bacteria (but not against all strains tested), Gram-positive bacteria (all strains tested) and the fungi C.albicans and C.parapsilosis. Exhibits little hemolytic activity against washed human erythrocytes. This chain is Mastoparan-VT6, found in Vespa tropica (Greater banded hornet).